The chain runs to 262 residues: MWITQEITPYLRKEYTIEAKLLDVRSEHNILEIFKSKDFGEIAMLNRQLLFKNFLHIESELLAHMGGCTKKELKEVLIVDGFDLELAHQLFKYDTHIDFVQADEKILDSFISFFPHFHEVKNNKNFTHAKQLLDLDIKKYDLILCLQEPDIHKIDGLKRMLKEDGVFISVAKHPLLEHVSMQNALKNLGDFFAVAMPFVAPLRILSNKGYIYASFKTHPLKDLMAPKIEALTSVRYYNEDIHRAAFALPKNLQEVFKDNIKS.

The region spanning 1-249 is the PABS domain; it reads MWITQEITPY…DIHRAAFALP (249 aa). Asparagine 29 contacts S-methyl-5'-thioadenosine. Aspartate 83 contacts spermidine. Aspartate 155 functions as the Proton acceptor in the catalytic mechanism.

Belongs to the spermidine/spermine synthase family. As to quaternary structure, homodimer or homotetramer.

The protein localises to the cytoplasm. It catalyses the reaction S-adenosyl 3-(methylsulfanyl)propylamine + putrescine = S-methyl-5'-thioadenosine + spermidine + H(+). It participates in amine and polyamine biosynthesis; spermidine biosynthesis; spermidine from putrescine: step 1/1. Functionally, catalyzes the irreversible transfer of a propylamine group from the amino donor S-adenosylmethioninamine (decarboxy-AdoMet) to putrescine (1,4-diaminobutane) to yield spermidine. This chain is Polyamine aminopropyltransferase, found in Helicobacter pylori (strain G27).